A 129-amino-acid polypeptide reads, in one-letter code: Phosphoribosyl-AMP cyclohydrolase (129 aa).

Mg(2+) is bound at residue Asp-76. Cys-77 lines the Zn(2+) pocket. Mg(2+) contacts are provided by Asp-78 and Asp-80. Residues Cys-97 and Cys-104 each contribute to the Zn(2+) site.

Belongs to the PRA-CH family. Homodimer. Requires Mg(2+) as cofactor. It depends on Zn(2+) as a cofactor.

The protein resides in the cytoplasm. It carries out the reaction 1-(5-phospho-beta-D-ribosyl)-5'-AMP + H2O = 1-(5-phospho-beta-D-ribosyl)-5-[(5-phospho-beta-D-ribosylamino)methylideneamino]imidazole-4-carboxamide. It functions in the pathway amino-acid biosynthesis; L-histidine biosynthesis; L-histidine from 5-phospho-alpha-D-ribose 1-diphosphate: step 3/9. Functionally, catalyzes the hydrolysis of the adenine ring of phosphoribosyl-AMP. In Methylibium petroleiphilum (strain ATCC BAA-1232 / LMG 22953 / PM1), this protein is Phosphoribosyl-AMP cyclohydrolase.